A 315-amino-acid chain; its full sequence is Ribose-phosphate pyrophosphokinase (315 aa).

ATP-binding positions include 37–39 and 96–97; these read DGE and RQ. Residues His-131 and Asp-170 each contribute to the Mg(2+) site. Lys-194 is a catalytic residue. D-ribose 5-phosphate is bound by residues Arg-196, Asp-220, and 224 to 228; that span reads DTGGT.

This sequence belongs to the ribose-phosphate pyrophosphokinase family. Class I subfamily. In terms of assembly, homohexamer. The cofactor is Mg(2+).

The protein resides in the cytoplasm. The catalysed reaction is D-ribose 5-phosphate + ATP = 5-phospho-alpha-D-ribose 1-diphosphate + AMP + H(+). It participates in metabolic intermediate biosynthesis; 5-phospho-alpha-D-ribose 1-diphosphate biosynthesis; 5-phospho-alpha-D-ribose 1-diphosphate from D-ribose 5-phosphate (route I): step 1/1. Functionally, involved in the biosynthesis of the central metabolite phospho-alpha-D-ribosyl-1-pyrophosphate (PRPP) via the transfer of pyrophosphoryl group from ATP to 1-hydroxyl of ribose-5-phosphate (Rib-5-P). The protein is Ribose-phosphate pyrophosphokinase of Yersinia pestis.